The primary structure comprises 310 residues: Spermatid maturation protein 1 (310 aa).

Residues 29–49 (ILLLLGLIVCINIGINLVTLL) traverse the membrane as a helical segment. The interval 215–238 (ALSHKNNAAGSGGCVEGEQAQGQP) is disordered. Residues 262–286 (VYDARDVRRRLRELTQEVEALSHCY) adopt a coiled-coil conformation.

Testis-specific. Exclusively present in cytoplasm of steps 14-16 elongated spermatids (at protein level).

Its subcellular location is the membrane. The protein localises to the cytoplasm. Its function is as follows. Required for proper cytoplasm removal during spermatogenesis. The chain is Spermatid maturation protein 1 (Spem1) from Mus musculus (Mouse).